The chain runs to 697 residues: MAR-binding filament-like protein 1 (697 aa).

A chloroplast-targeting transit peptide spans 1–41; sequence MATSCFPPFSASSSSLCSSQFTPLLSCPRNTQICRKKRPVM. Residues 42-79 constitute a thylakoid transit peptide; it reads ASMHSENQKESNVCNRRSILFVGFSVLPLLNLRARALE. Over 80 to 106 the chain is Lumenal, thylakoid; the sequence is GLSTDSQAQPQKEETEQTIQGSAGNPF. The segment at 81–100 is disordered; it reads LSTDSQAQPQKEETEQTIQG. Residues 107–127 form a helical membrane-spanning segment; the sequence is VSLLNGLGVVGSGVLGSLYAL. Over 128 to 697 the chain is Stromal; that stretch reads ARNEKAVSDA…GEKEKVNVQQ (570 aa). A coiled-coil region spans residues 203 to 671; it reads LQNEKKLAED…KGEILRLRSQ (469 aa). The interval 599 to 629 is disordered; that stretch reads TSRNSSLEDEREVHRQSVSEQKQISQEAQEN. The segment covering 604–615 has biased composition (basic and acidic residues); sequence SLEDEREVHRQS. The span at 616 to 627 shows a compositional bias: polar residues; it reads VSEQKQISQEAQ.

In terms of assembly, interacts with MAF1. Interacts with PTST2; the interaction is essential for the initiation of starch granules biosynthesis in leaf chloroplasts, for the correct location of the process in the stromal spaces between the thylakoid membranes, and for the association of PTST2 with the thylakoid membranes. Phosphorylated in vitro by human casein kinase II. In terms of processing, predicted to be translocated into the thylakoid by the Tat system.

The protein resides in the plastid. Its subcellular location is the chloroplast. The protein localises to the chloroplast thylakoid membrane. It is found in the chloroplast stroma. It localises to the chloroplast nucleoid. The protein resides in the nucleus. Its subcellular location is the nucleus matrix. Required for the initiation of starch granules biosynthesis in leaf chloroplasts. Anchored to the thylakoid membranes with its C-terminus facing into the stroma where it is essential for localizing PTST2 and SS4 to the stromal spaces between the thylakoid membranes in order to begin starch granule formation. Associated with leaf chloroplastic nucleoids in vivo. Binds to various chloroplastic double-stranded DNA fragments without particular sequence specificity in vitro. May function at the interface between nucleoids and thylakoids possibly by anchoring nucleoids to the thylakoid membrane system in mature chloroplasts. Binds nuclear DNA. Interacts with chromatin via matrix attachment regions (MARs). Likely to participate in nuclear architecture by connecting chromatin with the nuclear matrix and potentially with the nuclear envelope. This Solanum lycopersicum (Tomato) protein is MAR-binding filament-like protein 1.